Here is a 23-residue protein sequence, read N- to C-terminus: Defensin-like protein 2 (23 aa).

Position 1 is a pyrrolidone carboxylic acid (Q1).

It belongs to the DEFL family. As to quaternary structure, forms oligomers in its native state.

Possesses antifungal activity sensitive to inorganic cations. In Brassica napus (Rape), this protein is Defensin-like protein 2.